We begin with the raw amino-acid sequence, 261 residues long: Large ribosomal subunit protein uL2 (261 aa).

The interval 207–233 (VEHPHGGGNHQHIGKASTVKRGTPPGR) is disordered.

This sequence belongs to the universal ribosomal protein uL2 family.

It is found in the cytoplasm. This Aedes albopictus (Asian tiger mosquito) protein is Large ribosomal subunit protein uL2 (RpL8).